The chain runs to 275 residues: Hydroxyethylthiazole kinase (275 aa).

Met50 is a substrate binding site. ATP-binding residues include Arg126 and Ser171. Position 200 (Ala200) interacts with substrate.

It belongs to the Thz kinase family. Requires Mg(2+) as cofactor.

The enzyme catalyses 5-(2-hydroxyethyl)-4-methylthiazole + ATP = 4-methyl-5-(2-phosphooxyethyl)-thiazole + ADP + H(+). The protein operates within cofactor biosynthesis; thiamine diphosphate biosynthesis; 4-methyl-5-(2-phosphoethyl)-thiazole from 5-(2-hydroxyethyl)-4-methylthiazole: step 1/1. Its function is as follows. Catalyzes the phosphorylation of the hydroxyl group of 4-methyl-5-beta-hydroxyethylthiazole (THZ). This is Hydroxyethylthiazole kinase from Acinetobacter baumannii (strain ACICU).